A 95-amino-acid polypeptide reads, in one-letter code: Aspartyl/glutamyl-tRNA(Asn/Gln) amidotransferase subunit C (95 aa).

This sequence belongs to the GatC family. In terms of assembly, heterotrimer of A, B and C subunits.

It catalyses the reaction L-glutamyl-tRNA(Gln) + L-glutamine + ATP + H2O = L-glutaminyl-tRNA(Gln) + L-glutamate + ADP + phosphate + H(+). It carries out the reaction L-aspartyl-tRNA(Asn) + L-glutamine + ATP + H2O = L-asparaginyl-tRNA(Asn) + L-glutamate + ADP + phosphate + 2 H(+). Its function is as follows. Allows the formation of correctly charged Asn-tRNA(Asn) or Gln-tRNA(Gln) through the transamidation of misacylated Asp-tRNA(Asn) or Glu-tRNA(Gln) in organisms which lack either or both of asparaginyl-tRNA or glutaminyl-tRNA synthetases. The reaction takes place in the presence of glutamine and ATP through an activated phospho-Asp-tRNA(Asn) or phospho-Glu-tRNA(Gln). This chain is Aspartyl/glutamyl-tRNA(Asn/Gln) amidotransferase subunit C, found in Rhodopseudomonas palustris (strain BisB5).